We begin with the raw amino-acid sequence, 373 residues long: ATP phosphoribosyltransferase regulatory subunit (373 aa).

Belongs to the class-II aminoacyl-tRNA synthetase family. HisZ subfamily. As to quaternary structure, heteromultimer composed of HisG and HisZ subunits.

It localises to the cytoplasm. Its pathway is amino-acid biosynthesis; L-histidine biosynthesis; L-histidine from 5-phospho-alpha-D-ribose 1-diphosphate: step 1/9. Functionally, required for the first step of histidine biosynthesis. May allow the feedback regulation of ATP phosphoribosyltransferase activity by histidine. The chain is ATP phosphoribosyltransferase regulatory subunit from Rhizobium johnstonii (strain DSM 114642 / LMG 32736 / 3841) (Rhizobium leguminosarum bv. viciae).